Here is a 364-residue protein sequence, read N- to C-terminus: Anhydro-N-acetylmuramic acid kinase (364 aa).

Position 12–19 (12–19) interacts with ATP; the sequence is GTSHDAID.

This sequence belongs to the anhydro-N-acetylmuramic acid kinase family.

The catalysed reaction is 1,6-anhydro-N-acetyl-beta-muramate + ATP + H2O = N-acetyl-D-muramate 6-phosphate + ADP + H(+). The protein operates within amino-sugar metabolism; 1,6-anhydro-N-acetylmuramate degradation. It participates in cell wall biogenesis; peptidoglycan recycling. Functionally, catalyzes the specific phosphorylation of 1,6-anhydro-N-acetylmuramic acid (anhMurNAc) with the simultaneous cleavage of the 1,6-anhydro ring, generating MurNAc-6-P. Is required for the utilization of anhMurNAc either imported from the medium or derived from its own cell wall murein, and thus plays a role in cell wall recycling. This is Anhydro-N-acetylmuramic acid kinase from Gamma-proteobacterium EBAC31A08.